The sequence spans 396 residues: Succinyl-CoA:mesaconate CoA-transferase (396 aa).

Residue aspartate 175 is the Nucleophile of the active site.

The protein belongs to the CoA-transferase III family.

It catalyses the reaction mesaconate + succinyl-CoA = 2-methylfumaryl-CoA + succinate. In terms of biological role, involved in the methylaspartate cycle. Catalyzes the transfer of the CoA moiety from succinyl-CoA to mesaconate to generate mesaconyl-CoA (2-methylfumaryl-CoA) and succinate. The chain is Succinyl-CoA:mesaconate CoA-transferase from Haloarcula marismortui (strain ATCC 43049 / DSM 3752 / JCM 8966 / VKM B-1809) (Halobacterium marismortui).